A 1218-amino-acid chain; its full sequence is Structural maintenance of chromosomes protein 2 (1218 aa).

ATP is bound at residue 32-39; that stretch reads GLNGSGKS. Residues 209–517 are a coiled coil; that stretch reads VKLKKEKEEY…INSVKIDYKI (309 aa). An SMC hinge domain is found at 525-654; that stretch reads DVLGQIYKLI…CSNVDLCKKI (130 aa). 2 coiled-coil regions span residues 693–949 and 978–1045; these read LNYE…DTVK and RHDV…KKSE.

It belongs to the SMC family. SMC2 subfamily.

It localises to the nucleus. Its function is as follows. May play a role in the conversion of interphase chromatin into condensed chromosomes. The sequence is that of Structural maintenance of chromosomes protein 2 from Plasmodium falciparum (isolate 3D7).